Consider the following 60-residue polypeptide: Large ribosomal subunit protein uL30 (60 aa).

The protein belongs to the universal ribosomal protein uL30 family. Part of the 50S ribosomal subunit.

The chain is Large ribosomal subunit protein uL30 from Streptococcus mutans serotype c (strain ATCC 700610 / UA159).